We begin with the raw amino-acid sequence, 489 residues long: 3-octaprenyl-4-hydroxybenzoate carboxy-lyase (489 aa).

N172 contacts Mn(2+). Prenylated FMN is bound by residues 175-177, 189-191, and 194-195; these read IYR, RWL, and RG. E238 lines the Mn(2+) pocket. D287 functions as the Proton donor in the catalytic mechanism.

The protein belongs to the UbiD family. As to quaternary structure, homohexamer. Requires prenylated FMN as cofactor. Mn(2+) serves as cofactor.

Its subcellular location is the cell membrane. It catalyses the reaction a 4-hydroxy-3-(all-trans-polyprenyl)benzoate + H(+) = a 2-(all-trans-polyprenyl)phenol + CO2. It participates in cofactor biosynthesis; ubiquinone biosynthesis. Functionally, catalyzes the decarboxylation of 3-octaprenyl-4-hydroxy benzoate to 2-octaprenylphenol, an intermediate step in ubiquinone biosynthesis. The polypeptide is 3-octaprenyl-4-hydroxybenzoate carboxy-lyase (Aeromonas hydrophila subsp. hydrophila (strain ATCC 7966 / DSM 30187 / BCRC 13018 / CCUG 14551 / JCM 1027 / KCTC 2358 / NCIMB 9240 / NCTC 8049)).